Consider the following 234-residue polypeptide: Triosephosphate isomerase (234 aa).

Substrate is bound at residue 8-10 (NFK). Histidine 90 functions as the Electrophile in the catalytic mechanism. The active-site Proton acceptor is glutamate 159. Substrate contacts are provided by glycine 165 and serine 197.

It belongs to the triosephosphate isomerase family. Homodimer.

It is found in the cytoplasm. It carries out the reaction D-glyceraldehyde 3-phosphate = dihydroxyacetone phosphate. It participates in carbohydrate biosynthesis; gluconeogenesis. The protein operates within carbohydrate degradation; glycolysis; D-glyceraldehyde 3-phosphate from glycerone phosphate: step 1/1. Its function is as follows. Involved in the gluconeogenesis. Catalyzes stereospecifically the conversion of dihydroxyacetone phosphate (DHAP) to D-glyceraldehyde-3-phosphate (G3P). The sequence is that of Triosephosphate isomerase from Helicobacter pylori (strain J99 / ATCC 700824) (Campylobacter pylori J99).